We begin with the raw amino-acid sequence, 554 residues long: Formate--tetrahydrofolate ligase (554 aa).

64 to 71 (TPYGEGKT) is a binding site for ATP.

Belongs to the formate--tetrahydrofolate ligase family.

The catalysed reaction is (6S)-5,6,7,8-tetrahydrofolate + formate + ATP = (6R)-10-formyltetrahydrofolate + ADP + phosphate. It functions in the pathway one-carbon metabolism; tetrahydrofolate interconversion. The polypeptide is Formate--tetrahydrofolate ligase (Caldicellulosiruptor saccharolyticus (strain ATCC 43494 / DSM 8903 / Tp8T 6331)).